Consider the following 406-residue polypeptide: Large ribosomal subunit protein uL4z (406 aa).

The interval P56–A95 is disordered.

The protein belongs to the universal ribosomal protein uL4 family.

This chain is Large ribosomal subunit protein uL4z (RPL4A), found in Arabidopsis thaliana (Mouse-ear cress).